A 371-amino-acid chain; its full sequence is Bifunctional enzyme IspD/IspF (371 aa).

The interval 1–212 (MLDISLIMLG…CLIPPSNEHF (212 aa)) is 2-C-methyl-D-erythritol 4-phosphate cytidylyltransferase. The segment at 212–371 (FTGIGFDAHE…ANLKYYDWTK (160 aa)) is 2-C-methyl-D-erythritol 2,4-cyclodiphosphate synthase. The a divalent metal cation site is built by Asp218 and His220. 4-CDP-2-C-methyl-D-erythritol 2-phosphate is bound by residues 218–220 (DAH) and 244–245 (HS). His252 lines the a divalent metal cation pocket. 4-CDP-2-C-methyl-D-erythritol 2-phosphate is bound by residues 266–268 (DIG), 271–275 (FPDTD), 342–345 (TTTE), Phe349, and Arg352.

In the N-terminal section; belongs to the IspD/TarI cytidylyltransferase family. IspD subfamily. It in the C-terminal section; belongs to the IspF family. A divalent metal cation serves as cofactor.

The catalysed reaction is 2-C-methyl-D-erythritol 4-phosphate + CTP + H(+) = 4-CDP-2-C-methyl-D-erythritol + diphosphate. The enzyme catalyses 4-CDP-2-C-methyl-D-erythritol 2-phosphate = 2-C-methyl-D-erythritol 2,4-cyclic diphosphate + CMP. It functions in the pathway isoprenoid biosynthesis; isopentenyl diphosphate biosynthesis via DXP pathway; isopentenyl diphosphate from 1-deoxy-D-xylulose 5-phosphate: step 2/6. The protein operates within isoprenoid biosynthesis; isopentenyl diphosphate biosynthesis via DXP pathway; isopentenyl diphosphate from 1-deoxy-D-xylulose 5-phosphate: step 4/6. Functionally, bifunctional enzyme that catalyzes the formation of 4-diphosphocytidyl-2-C-methyl-D-erythritol from CTP and 2-C-methyl-D-erythritol 4-phosphate (MEP) (IspD), and catalyzes the conversion of 4-diphosphocytidyl-2-C-methyl-D-erythritol 2-phosphate (CDP-ME2P) to 2-C-methyl-D-erythritol 2,4-cyclodiphosphate (ME-CPP) with a corresponding release of cytidine 5-monophosphate (CMP) (IspF). This Campylobacter curvus (strain 525.92) protein is Bifunctional enzyme IspD/IspF.